The sequence spans 148 residues: FAD synthase (148 aa).

ATP-binding positions include 14–15, 19–22, and aspartate 100; these read VF and HVGH.

Belongs to the archaeal FAD synthase family. In terms of assembly, homodimer. A divalent metal cation serves as cofactor.

The catalysed reaction is FMN + ATP + H(+) = FAD + diphosphate. It functions in the pathway cofactor biosynthesis; FAD biosynthesis; FAD from FMN: step 1/1. In terms of biological role, catalyzes the transfer of the AMP portion of ATP to flavin mononucleotide (FMN) to produce flavin adenine dinucleotide (FAD) coenzyme. This chain is FAD synthase, found in Pyrococcus abyssi (strain GE5 / Orsay).